A 449-amino-acid chain; its full sequence is Hyaluronidase-1 (449 aa).

Residues 1-23 (MYHIWIKFLAAWIFLKRFNGVHV) form the signal peptide. 2 disulfides stabilise this stretch: C47/C340 and C211/C227. 3 N-linked (GlcNAc...) asparagine glycosylation sites follow: N67, N103, and N111. E135 acts as the Proton donor in catalysis. Residue N153 is glycosylated (N-linked (GlcNAc...) asparagine). A glycan (N-linked (GlcNAc...) asparagine) is linked at N357. Disulfide bonds link C365–C376, C370–C427, and C429–C438. N401 carries an N-linked (GlcNAc...) asparagine glycan. An EGF-like domain is found at 427-438 (CQCYQGWKGLYC).

The protein belongs to the glycosyl hydrolase 56 family. Monomer. In terms of tissue distribution, expressed by the venom gland.

It localises to the secreted. It carries out the reaction Random hydrolysis of (1-&gt;4)-linkages between N-acetyl-beta-D-glucosamine and D-glucuronate residues in hyaluronate.. In terms of biological role, snake venom endo-hyaluronidase that degrades hyaluronan to smaller oligosaccharide fragments. In venom, it is not toxic by itself, but increases the diffusion of other venom proteins by degrading the extracellular matrix. In addition, it displays antiedematogenic activity. The chain is Hyaluronidase-1 from Cerastes cerastes (Horned desert viper).